A 255-amino-acid chain; its full sequence is 5-oxoprolinase subunit A (255 aa).

This sequence belongs to the LamB/PxpA family. Forms a complex composed of PxpA, PxpB and PxpC.

The catalysed reaction is 5-oxo-L-proline + ATP + 2 H2O = L-glutamate + ADP + phosphate + H(+). In terms of biological role, catalyzes the cleavage of 5-oxoproline to form L-glutamate coupled to the hydrolysis of ATP to ADP and inorganic phosphate. This Pyrococcus abyssi (strain GE5 / Orsay) protein is 5-oxoprolinase subunit A.